We begin with the raw amino-acid sequence, 249 residues long: UPF0309 protein GTNG_1302 (249 aa).

Residues 31–214 (VSKAVQNGGI…ALMAENGVEP (184 aa)) form the SIS domain.

Belongs to the UPF0309 family.

In Geobacillus thermodenitrificans (strain NG80-2), this protein is UPF0309 protein GTNG_1302.